The sequence spans 256 residues: Extracellular serine-rich protein ARB_03024 (256 aa).

A signal peptide spans 1–19 (MVATKSVLSAVALAGVAAA). The segment at 135–235 (KIVPQSGSPT…TPTASPGAAA (101 aa)) is disordered. Over residues 149-159 (GTLGGSGGSGG) the composition is skewed to gly residues. Low complexity-rich tracts occupy residues 160–204 (SSSS…QSTP) and 215–235 (PSAT…GAAA). Ala233 carries GPI-anchor amidated alanine lipidation. A propeptide spans 234 to 256 (AAGLKGSAVLAGVVALGAWIGLL) (removed in mature form).

It is found in the cell membrane. The protein resides in the secreted. The protein is Extracellular serine-rich protein ARB_03024 of Arthroderma benhamiae (strain ATCC MYA-4681 / CBS 112371) (Trichophyton mentagrophytes).